The primary structure comprises 1435 residues: Cardiac-enriched FHL2-interacting protein (1435 aa).

Disordered regions lie at residues Glu-109–Phe-176, Ser-203–Ser-234, Phe-250–Leu-270, and Lys-291–Leu-311. The residue at position 120 (Thr-120) is a Phosphothreonine. Residues Leu-133 to Ile-147 are compositionally biased toward polar residues. The segment covering Ser-149 to Ser-160 has biased composition (basic and acidic residues). Ser-323 carries the phosphoserine modification. Disordered regions lie at residues Glu-362–Ser-592, Ala-609–Asn-772, Ser-795–Ser-847, Pro-1007–Thr-1108, Ser-1138–Pro-1261, and Gln-1363–Ser-1435. Residues Lys-389–Thr-402 show a composition bias toward basic and acidic residues. Ser-470 is subject to Phosphoserine. 4 stretches are compositionally biased toward basic and acidic residues: residues Gln-479–Lys-493, Val-522–Gln-535, Ala-609–Glu-620, and Cys-650–Gln-667. The segment covering Leu-668–Glu-679 has biased composition (polar residues). The span at Lys-727–Asp-741 shows a compositional bias: low complexity. Over residues Asn-751–Asn-772 the composition is skewed to basic and acidic residues. Residue Ser-816 is modified to Phosphoserine. Residues Lys-831–Ser-847 show a composition bias toward polar residues. The segment covering Asn-1055–Ser-1066 has biased composition (low complexity). Residues Ala-1067–Ala-1082 show a composition bias toward polar residues. Over residues Pro-1083 to Pro-1093 the composition is skewed to low complexity. A compositionally biased stretch (polar residues) spans Asn-1094–Ala-1105. Positions Arg-1182–Lys-1193 are enriched in basic residues. The segment covering Thr-1194–Pro-1211 has biased composition (basic and acidic residues). Residues Asp-1424–Ser-1435 are compositionally biased toward acidic residues.

In terms of assembly, interacts with FHL2. Expressed in the heart and skeletal muscle.

It is found in the cytoplasm. It localises to the myofibril. The protein localises to the sarcomere. The protein resides in the z line. Functionally, plays an important role in cardiomyocyte hypertrophy via activation of the calcineurin/NFAT signaling pathway. This chain is Cardiac-enriched FHL2-interacting protein, found in Homo sapiens (Human).